The primary structure comprises 744 residues: MAGRTMQAARCPTDELSLSNCAVVNEKDYQSGQHVMVRTSPNHKYIFTLRTHPSVVPGCIAFSLPQRKWAGLSIGQDIEVALYSFDKAKQCIGTMTIEIDFLQKKNIDSNPYDTDKMAAEFIQQFNHQAFSVGQQLVFSFNDKLFGLLVKDIEAMDPSILKGEPASGKRQKIEVGLVVGNSQVAFEKAENSSLNLIGKAKTKENRQSIINPDWNFEKMGIGGLDKEFSDIFRRAFASRVFPPEIVEQMGCKHVKGILLYGPPGCGKTLLARQIGKMLNAREPKVVNGPEILNKYVGESEANIRKLFADAEEEQRRLGANSGLHIIIFDEIDAICKQRGSMAGSTGVHDTVVNQLLSKIDGVEQLNNILVIGMTNRPDLIDEALLRPGRLEVKMEIGLPDEKGRLQILHIHTARMRGHQLLSADVDIKELAVETKNFSGAELEGLVRAAQSTAMNRHIKASTKVEVDMEKAESLQVTRGDFLASLENDIKPAFGTNQEDYASYIMNGIIKWGDPVTRVLDDGELLVQQTKNSDRTPLVSVLLEGPPHSGKTALAAKIAEESNFPFIKICSPDKMIGFSETAKCQAMKKIFDDAYKSQLSCVVVDDIERLLDYVPIGPRFSNLVLQALLVLLKKAPPQGRKLLIIGTTSRKDVLQEMEMLNAFSTTIHVPNIATGEQLLEALELLGNFKDKERTTIAQQVKGKKVWIGIKKLLMLIEMSLQMDPEYRVRKFLALMREEGASPLDFD.

K105 is subject to N6-acetyllysine. S207 carries the phosphoserine modification. At Y259 the chain carries Phosphotyrosine. ATP contacts are provided by residues 505 to 510 and 545 to 552; these read NGIIKW and PHSGKTAL. T550 is a Mg(2+) binding site. S569 is modified (phosphoserine; by CDK16).

The protein belongs to the AAA ATPase family. Homohexamer. Interacts with GABARAP and GABARAPL2. Interacts with GRIA2. Interacts with PLK2, leading to disrupt the interaction with GRIA2. Interacts with MUSK; may regulate MUSK endocytosis and activity. Interacts with CDK16. It depends on Mg(2+) as a cofactor. Post-translationally, phosphorylation at Ser-569 interferes with homohexamerization. Detected in brain (at protein level).

It is found in the cytoplasm. The catalysed reaction is ATP + H2O = ADP + phosphate + H(+). Its function is as follows. Required for vesicle-mediated transport. Catalyzes the fusion of transport vesicles within the Golgi cisternae. Is also required for transport from the endoplasmic reticulum to the Golgi stack. Seems to function as a fusion protein required for the delivery of cargo proteins to all compartments of the Golgi stack independent of vesicle origin. Interaction with AMPAR subunit GRIA2 leads to influence GRIA2 membrane cycling. This is Vesicle-fusing ATPase (Nsf) from Rattus norvegicus (Rat).